The primary structure comprises 261 residues: MSESLHLTRNGSILEITLDRPKANAIDAKTSFEMGEVFLNFRDDPQLRVAIITGAGEKFFSAGWDLKAAAEGEAPDADFGPGGFAGLTEIFNLDKPVIAAVNGYAFGGGFELALAADFIVCADNASFALPEAKLGIVPDSGGVLRLPKILPPAIVNEMVMTGRRMGAEEALRWGVVNRVVSQAELMDNARELAQQLVNSAPLAIAALKEIYRTTSEMPVEEAYRYIRSGVLKHYPSVLHSEDAIEGPLAFAEKRDPVWKGR.

Catalysis depends on Glu111, which acts as the Nucleophile. Glu131 (proton acceptor) is an active-site residue.

The protein belongs to the enoyl-CoA hydratase/isomerase family.

The catalysed reaction is (R)-carnitinyl-CoA = crotonobetainyl-CoA + H2O. The protein operates within amine and polyamine metabolism; carnitine metabolism. Catalyzes the reversible dehydration of L-carnitinyl-CoA to crotonobetainyl-CoA. The polypeptide is Carnitinyl-CoA dehydratase (Escherichia coli O6:K15:H31 (strain 536 / UPEC)).